A 254-amino-acid chain; its full sequence is MIKVVICGAFGRMGTIIGEIISKEQDMQLVGGVDIKEGTFFGVPVVTSDKLADFLSSVQPDVVIDFTVAPAAAQNVPVAARAGCAIILGTTGLTQEQRKGIDAAIREGKVPAVISTNYSIGMNILWTLIRDAARKLSDYDVEVIEAHHRYKKDAPSGTARTILQILQEEIGPREEIYGREGMTERSSEIGVHVIRGGDIVGDHAVMFASNFETVTLSHRAYDRSVFAEGAVRATRWVFGKEPGIYGMKDVLNLS.

An NAD(+)-binding site is contributed by 8-13 (GAFGRM). K36 serves as a coordination point for NADP(+). Residues 89-91 (GTT) and 115-118 (STNY) each bind NAD(+). The Proton donor/acceptor role is filled by H147. Position 148 (H148) interacts with (S)-2,3,4,5-tetrahydrodipicolinate. The active-site Proton donor is the K151. A (S)-2,3,4,5-tetrahydrodipicolinate-binding site is contributed by 157-158 (GT).

It belongs to the DapB family.

It is found in the cytoplasm. It catalyses the reaction (S)-2,3,4,5-tetrahydrodipicolinate + NAD(+) + H2O = (2S,4S)-4-hydroxy-2,3,4,5-tetrahydrodipicolinate + NADH + H(+). The enzyme catalyses (S)-2,3,4,5-tetrahydrodipicolinate + NADP(+) + H2O = (2S,4S)-4-hydroxy-2,3,4,5-tetrahydrodipicolinate + NADPH + H(+). It functions in the pathway amino-acid biosynthesis; L-lysine biosynthesis via DAP pathway; (S)-tetrahydrodipicolinate from L-aspartate: step 4/4. Its function is as follows. Catalyzes the conversion of 4-hydroxy-tetrahydrodipicolinate (HTPA) to tetrahydrodipicolinate. The chain is 4-hydroxy-tetrahydrodipicolinate reductase from Methanospirillum hungatei JF-1 (strain ATCC 27890 / DSM 864 / NBRC 100397 / JF-1).